The primary structure comprises 841 residues: Transcription regulator protein BACH2 (841 aa).

The 67-residue stretch at 37–103 (CDVTLIVERK…AYTAKLLLSR (67 aa)) folds into the BTB domain. 3 disordered regions span residues 153–173 (HEDCENSAGEEEDEEEETMDS), 204–226 (EALLPEPDVPTDTKESSEKDALT), and 246–329 (SSHS…AACL). A compositionally biased stretch (acidic residues) spans 160–172 (AGEEEDEEEETMD). Composition is skewed to basic and acidic residues over residues 214–224 (TDTKESSEKDA) and 298–313 (PDAKDRAGDVEMDRKQ). S315 carries the phosphoserine modification. Glycyl lysine isopeptide (Lys-Gly) (interchain with G-Cter in SUMO2) cross-links involve residues K382 and K421. S521 carries the phosphoserine; by RPS6KB1 modification. Residues 583 to 610 (QSYGTNSSDESGSFSEADSESCPVQDRG) form a disordered region. Polar residues predominate over residues 584-598 (SYGTNSSDESGSFSE). Residues 646–709 (FIHDVRRRSK…GELLDNFSCL (64 aa)) form the bZIP domain. A basic motif region spans residues 651–667 (RRRSKNRIAAQRCRKRK). A leucine-zipper region spans residues 671–678 (IQNLECEI). Positions 777–816 (PGPPWAPSNTSENCTSGRRLEGTDPGTFSERGPPLEPRSQ) are disordered. The short motif at 821 to 841 (DFCQEMTDKCTTDEQPRKDYT) is the Nuclear export signal element.

This sequence belongs to the bZIP family. CNC subfamily. As to quaternary structure, homodimer; disulfide-linked. Heterodimer of BACH2 and Maf-related transcription factors. In terms of processing, phosphorylation at Ser-521 downstream of the PI-3K pathway promotes nuclear export. Post-translationally, the reversible disulfide bond may provide a mechanism to regulate the activity in oxidative stress responses. B-cell specific.

It is found in the cytoplasm. Its subcellular location is the nucleus. Its function is as follows. Transcriptional regulator that acts as a repressor or activator. Binds to Maf recognition elements (MARE). Plays an important role in coordinating transcription activation and repression by MAFK. Induces apoptosis in response to oxidative stress through repression of the antiapoptotic factor HMOX1. Positively regulates the nuclear import of actin. Is a key regulator of adaptive immunity, crucial for the maintenance of regulatory T-cell function and B-cell maturation. This Homo sapiens (Human) protein is Transcription regulator protein BACH2 (BACH2).